A 433-amino-acid polypeptide reads, in one-letter code: UPF0597 protein PG_0909 (433 aa).

The protein belongs to the UPF0597 family.

The sequence is that of UPF0597 protein PG_0909 from Porphyromonas gingivalis (strain ATCC BAA-308 / W83).